Here is a 242-residue protein sequence, read N- to C-terminus: uncharacterized protein (242 aa).

Low complexity predominate over residues 1 to 11 (MNFEAASAPSQ). Residues 1-45 (MNFEAASAPSQQPSPTPAPKTEEPKENGGSEQQADQPENSKKDDV) are disordered.

To U.parvum UU171.

This is an uncharacterized protein from Ureaplasma parvum serovar 3 (strain ATCC 700970).